We begin with the raw amino-acid sequence, 404 residues long: MANASGFFTHPSIPNLRSRIHVPVRVSGSGFCVSNRFSKRVLCSSVSSVDKDASSSPSQYQRPRLVPSGCKLIGCGSAVPSLLISNDDLAKIVDTNDEWIATRTGIRNRRVVSGKDSLVGLAVEAATKALEMAEVVPEDIDLVLMCTSTPDDLFGAAPQIQKALGCTKNPLAYDITAACSGFVLGLVSAACHIRGGGFKNVLVIGADSLSRFVDWTDRGTCILFGDAAGAVVVQACDIEDDGLFSFDVHSDGDGRRHLNASVKESQNDGESSSNGSVFGDFPPKQSSYSCIQMNGKEVFRFAVKCVPQSIESALQKAGLPASAIDWLLLHQANQRIIDSVATRLHFPPERVISNLANYGNTSAASIPLALDEAVRSGKVKPGHTIATSGFGAGLTWGSAIMRWR.

A chloroplast-targeting transit peptide spans 1-43; that stretch reads MANASGFFTHPSIPNLRSRIHVPVRVSGSGFCVSNRFSKRVLC. Active-site residues include Cys179, His330, and Asn360.

This sequence belongs to the thiolase-like superfamily. FabH family.

It is found in the plastid. The protein localises to the chloroplast. The catalysed reaction is malonyl-[ACP] + acetyl-CoA + H(+) = 3-oxobutanoyl-[ACP] + CO2 + CoA. It functions in the pathway lipid metabolism; fatty acid biosynthesis. In terms of biological role, catalyzes the condensation reaction of fatty acid synthesis by the addition to an acyl acceptor of two carbons from malonyl-ACP. KAS III catalyzes the first condensation reaction which initiates fatty acid synthesis and may therefore play a role in governing the total rate of fatty acid production. Possesses both acetoacetyl-ACP synthase and acetyl transacylase activities. The chain is Beta-ketoacyl-[acyl-carrier-protein] synthase III, chloroplastic from Arabidopsis thaliana (Mouse-ear cress).